The chain runs to 608 residues: Aspartate--tRNA(Asp/Asn) ligase (608 aa).

E175 is an L-aspartate binding site. The tract at residues 199–202 (QLFK) is aspartate. R221 is a binding site for L-aspartate. Residues 221 to 223 (RDE) and Q230 contribute to the ATP site. H453 serves as a coordination point for L-aspartate. E487 serves as a coordination point for ATP. R494 is a binding site for L-aspartate. 539 to 542 (GWDR) contributes to the ATP binding site. Positions 566–608 (IDPLTDAPAAITPQQRKEAGIDAKPKPKAEAQAEAQAEESAEK) are disordered. Residues 580–596 (QRKEAGIDAKPKPKAEA) show a composition bias toward basic and acidic residues.

The protein belongs to the class-II aminoacyl-tRNA synthetase family. Type 1 subfamily. As to quaternary structure, homodimer.

The protein localises to the cytoplasm. The catalysed reaction is tRNA(Asx) + L-aspartate + ATP = L-aspartyl-tRNA(Asx) + AMP + diphosphate. Its function is as follows. Aspartyl-tRNA synthetase with relaxed tRNA specificity since it is able to aspartylate not only its cognate tRNA(Asp) but also tRNA(Asn). Reaction proceeds in two steps: L-aspartate is first activated by ATP to form Asp-AMP and then transferred to the acceptor end of tRNA(Asp/Asn). The chain is Aspartate--tRNA(Asp/Asn) ligase from Corynebacterium glutamicum (strain ATCC 13032 / DSM 20300 / JCM 1318 / BCRC 11384 / CCUG 27702 / LMG 3730 / NBRC 12168 / NCIMB 10025 / NRRL B-2784 / 534).